The sequence spans 2271 residues: Serine-rich adhesin for platelets (2271 aa).

An N-terminal signal peptide occupies residues 1–89 (MSKRQKAFHD…VNMLHDQQAF (89 aa)). Residues 90-230 (AASDAPLTSE…KTSTTSTSTA (141 aa)) are serine-rich repeat region 1, SRR1. Positions 100–111 (LNTQSETVGNQN) are enriched in polar residues. The tract at residues 100–229 (LNTQSETVGN…NKTSTTSTST (130 aa)) is disordered. Positions 112–128 (STTIEASTSTADSTSVT) are enriched in low complexity. Residues 129–140 (KNSSSVQTSNSD) show a composition bias toward polar residues. Residues 150 to 229 (VTSTTNSTSN…NKTSTTSTST (80 aa)) show a composition bias toward low complexity. The non-repeat region (NRR) stretch occupies residues 231–751 (PVKLRTFSRL…TTFKYEVTRN (521 aa)). The segment at 245–491 (FASAATTTAV…QQVQFGTFEY (247 aa)) is L-lectin module. The Ca(2+) site is built by Asp-365, Tyr-367, Asn-369, and Asp-382. The beta-grasp module stretch occupies residues 492–571 (TESAVTQVRY…NAGQSVTYYF (80 aa)). The interval 572-659 (TDVKAPTVTV…KSTTTFTINV (88 aa)) is cadherin-like module-1. Ca(2+)-binding residues include Asp-573, Lys-575, Asp-601, Asn-602, Asp-645, Asp-661, Thr-663, Asp-690, Asn-691, and Asp-734. The segment at 660–751 (VDTTAPTVTP…TTFKYEVTRN (92 aa)) is cadherin-like module-2. Disordered stretches follow at residues 751–791 (NSMS…VVST) and 806–2242 (SVSA…NGLL). 3 stretches are compositionally biased toward low complexity: residues 752–791 (SMSD…VVST), 806–1392 (SVSA…LSLS), and 1402–2214 (SNSA…ATSE). The serine-rich repeat region 2, SRR2 stretch occupies residues 752–2232 (SMSDSVSTSG…AQSEKRLPDT (1481 aa)). The short motif at 2229-2233 (LPDTG) is the LPXTG sorting signal element. Thr-2232 carries the post-translational modification Pentaglycyl murein peptidoglycan amidated threonine. Residues 2233-2271 (GDSIKQNGLLGGVMTLLVGLGLMKRKKKKDENDQDDSQA) constitute a propeptide, removed by sortase.

The protein belongs to the serine-rich repeat protein (SRRP) family. Post-translationally, proteolytically cleaved by a metalloprotease. Glycosylated. It is probable that most of the Ser residues in SSR1 and SSR2 are O-GlcNAcylated. Sequential glycosylation by sugar transferases are able to generate complex sugar polymorphisms.

Its subcellular location is the secreted. The protein resides in the cell wall. Functionally, mediates binding to human platelets, possibly through a receptor-ligand interaction. Probably associated with virulence in endovascular infection. Plays a positive role in biofilm formation, possibly by self-association via the non-repeat region (NRR or binding region, BR). Binds to and plays a role in human lung epithelial cell invasion via the L-lectin module of its NRR domain; N-acetylneuraminic acid (Neu5Ac) inhibits binding. Treatment of host cells with neuraminidase decreases adherence of S.aureus cells, suggesting SraP recognizes a host terminal Neu5Ac moiety as a receptor. The protein is Serine-rich adhesin for platelets of Staphylococcus aureus (strain NCTC 8325 / PS 47).